The chain runs to 56 residues: MAVQKSKKSRSRRDMRRSHDAIDGPTLSVDSTTGETHRRHHVTADGYYKGRKVVNK.

A compositionally biased stretch (basic residues) spans 1–16 (MAVQKSKKSRSRRDMR). The interval 1-56 (MAVQKSKKSRSRRDMRRSHDAIDGPTLSVDSTTGETHRRHHVTADGYYKGRKVVNK) is disordered.

This sequence belongs to the bacterial ribosomal protein bL32 family.

The sequence is that of Large ribosomal subunit protein bL32 from Idiomarina loihiensis (strain ATCC BAA-735 / DSM 15497 / L2-TR).